The following is a 489-amino-acid chain: Rhamnulokinase (489 aa).

13–17 (ASSGR) contacts ATP. An intrachain disulfide couples C68 to C222. Residues G83 and 236-238 (HDT) each bind substrate. Residue D237 is the Proton acceptor of the active site. ATP is bound at residue T259. A substrate-binding site is contributed by N296. Residue Q304 coordinates ATP. C353 and C370 are disulfide-bonded. Residue G402 participates in ATP binding. The cysteines at positions 413 and 417 are disulfide-linked.

This sequence belongs to the rhamnulokinase family. As to quaternary structure, monomer. The cofactor is Mg(2+).

It carries out the reaction L-rhamnulose + ATP = L-rhamnulose 1-phosphate + ADP + H(+). Its pathway is carbohydrate degradation; L-rhamnose degradation; glycerone phosphate from L-rhamnose: step 2/3. Its function is as follows. Involved in the catabolism of L-rhamnose (6-deoxy-L-mannose). Catalyzes the transfer of the gamma-phosphate group from ATP to the 1-hydroxyl group of L-rhamnulose to yield L-rhamnulose 1-phosphate. This is Rhamnulokinase from Escherichia fergusonii (strain ATCC 35469 / DSM 13698 / CCUG 18766 / IAM 14443 / JCM 21226 / LMG 7866 / NBRC 102419 / NCTC 12128 / CDC 0568-73).